The chain runs to 567 residues: Sensor histidine kinase MtrB (567 aa).

Over residues Met1 to Arg15 the composition is skewed to basic residues. Positions Met1–Thr20 are disordered. The next 2 helical transmembrane spans lie at Val42 to Thr62 and Gly213 to Val233. The 53-residue stretch at Arg235 to Ala287 folds into the HAMP domain. In terms of domain architecture, Histidine kinase spans Asp302–Arg519. Position 305 is a phosphohistidine; by autocatalysis (His305). The disordered stretch occupies residues Ser526–Gly567. The segment covering Pro529–Pro551 has biased composition (pro residues). Basic and acidic residues predominate over residues Glu552–Gly567.

The protein localises to the cell membrane. It carries out the reaction ATP + protein L-histidine = ADP + protein N-phospho-L-histidine.. In terms of biological role, member of the two-component regulatory system MtrA/MtrB. Seems to function as a membrane-associated protein kinase that phosphorylates MtrA in response to environmental signals. The polypeptide is Sensor histidine kinase MtrB (mtrB) (Mycobacterium bovis (strain ATCC BAA-935 / AF2122/97)).